A 408-amino-acid polypeptide reads, in one-letter code: LL-diaminopimelate aminotransferase (408 aa).

Substrate contacts are provided by tyrosine 15 and glycine 42. Pyridoxal 5'-phosphate is bound by residues tyrosine 72, 108–109 (SK), tyrosine 132, asparagine 187, tyrosine 218, and 246–248 (SFS). 3 residues coordinate substrate: lysine 109, tyrosine 132, and asparagine 187. The residue at position 249 (lysine 249) is an N6-(pyridoxal phosphate)lysine. Pyridoxal 5'-phosphate-binding residues include arginine 257 and asparagine 292. Substrate contacts are provided by asparagine 292 and arginine 388.

The protein belongs to the class-I pyridoxal-phosphate-dependent aminotransferase family. LL-diaminopimelate aminotransferase subfamily. As to quaternary structure, homodimer. Pyridoxal 5'-phosphate is required as a cofactor.

The catalysed reaction is (2S,6S)-2,6-diaminopimelate + 2-oxoglutarate = (S)-2,3,4,5-tetrahydrodipicolinate + L-glutamate + H2O + H(+). It participates in amino-acid biosynthesis; L-lysine biosynthesis via DAP pathway; LL-2,6-diaminopimelate from (S)-tetrahydrodipicolinate (aminotransferase route): step 1/1. Functionally, involved in the synthesis of meso-diaminopimelate (m-DAP or DL-DAP), required for both lysine and peptidoglycan biosynthesis. Catalyzes the direct conversion of tetrahydrodipicolinate to LL-diaminopimelate. This Prochlorococcus marinus subsp. pastoris (strain CCMP1986 / NIES-2087 / MED4) protein is LL-diaminopimelate aminotransferase.